A 328-amino-acid polypeptide reads, in one-letter code: Formimidoylglutamase (328 aa).

Residues His133, Asp159, His161, Asp163, Asp253, and Asp255 each coordinate Mn(2+).

It belongs to the arginase family. Mn(2+) is required as a cofactor.

The enzyme catalyses N-formimidoyl-L-glutamate + H2O = formamide + L-glutamate. It participates in amino-acid degradation; L-histidine degradation into L-glutamate; L-glutamate from N-formimidoyl-L-glutamate (hydrolase route): step 1/1. Catalyzes the conversion of N-formimidoyl-L-glutamate to L-glutamate and formamide. This is Formimidoylglutamase from Streptococcus pyogenes serotype M3 (strain ATCC BAA-595 / MGAS315).